Here is a 101-residue protein sequence, read N- to C-terminus: Early E3A 11.6 kDa glycoprotein (101 aa).

A glycan (N-linked (GlcNAc...) asparagine; by host) is linked at Asn14. A helical transmembrane segment spans residues 41-62 (MWWFSIALMFVCLIIMWLICCL).

This sequence belongs to the adenoviridae E3A-1 family. In terms of processing, N-glycosylated and probably also O-glycosylated.

The protein resides in the host nucleus membrane. In Human adenovirus C serotype 6 (HAdV-6), this protein is Early E3A 11.6 kDa glycoprotein.